A 593-amino-acid polypeptide reads, in one-letter code: UvrABC system protein C (593 aa).

In terms of domain architecture, GIY-YIG spans 17–94 (MEPGCYLMKD…IKQYQPRYNI (78 aa)). Residues 199–234 (KTILKSLEERMLTASESLDFERAKEYRDLIQHIQNL) enclose the UVR domain.

It belongs to the UvrC family. As to quaternary structure, interacts with UvrB in an incision complex.

The protein resides in the cytoplasm. The UvrABC repair system catalyzes the recognition and processing of DNA lesions. UvrC both incises the 5' and 3' sides of the lesion. The N-terminal half is responsible for the 3' incision and the C-terminal half is responsible for the 5' incision. This chain is UvrABC system protein C, found in Staphylococcus aureus (strain MRSA252).